The chain runs to 360 residues: MASSSSNRQFSHRNANTFLTYPKCPENPEIACQMIWELVVRWIPKYILCAREAHKDGSLHLHALLQTEKPVRISDSRFFDINGFHPNIQSAKSVNRVRDYILKEPLAVFERGTFIPRKSPFLGKSDSEVKEKKPSKDEIMRDIISHATSKEEYLSMIQKELPFDWSTKLQYFEYSANKLFPEIQEEFTNPHPPSSPDLLCNESINDWLQPNIFQSSDERSRKQSLYIVGPTRTGKSTWARSLGVHNYWQNNVDWSSYNEDAIYNIVDDIPFKFCPCWKQLVGCQRDFIVNPKYGKKKKVQKKSKPTIILANSDEDWMKEMTPGQLEYFEANCIIYIMSPGEKWYSPPELPPTEAVHSDRS.

Residues 11–114 (SHRNANTFLT…PLAVFERGTF (104 aa)) enclose the CRESS-DNA virus Rep endonuclease domain. The RCR-1 motif lies at 18–21 (FLTY). Glu52, His60, and His62 together coordinate a divalent metal cation. The short motif at 60-62 (HLH) is the RCR-2 element. Tyr100 functions as the For DNA cleavage activity in the catalytic mechanism. The RCR-3 signature appears at 100–103 (YILK). Position 104 (Glu104) interacts with a divalent metal cation. The oligomerization stretch occupies residues 175 to 187 (SANKLFPEIQEEF). 229-236 (GPTRTGKS) lines the ATP pocket. Positions 252 to 270 (VDWSSYNEDAIYNIVDDIP) are transactivation. The Nuclear localization signal motif lies at 292–303 (KYGKKKKVQKKS).

The protein belongs to the geminiviridae Rep protein family. As to quaternary structure, homooligomer. Rep binds to repeated DNA motifs (iterons). Forms the O-complex, which is a Rep-DNA complex involved in the initiation of RCR. Part of the C- and V-complexes which are RepA-Rep-DNA complexes involved in the c-sense and v-sense transcription. Requires Mg(2+) as cofactor. The cofactor is Mn(2+).

Its subcellular location is the host nucleus. Functionally, essential for the replication of viral ssDNA. The closed circular ssDNA genome is first converted to a superhelical dsDNA. Rep binds a specific region at the genome origin of replication. It introduces an endonucleolytic nick within the conserved sequence 5'-TAATATTAC-3' in the intergenic region of the genome present in all geminiviruses, thereby initiating the rolling circle replication (RCR). Following cleavage, binds covalently to the 5'-phosphate of DNA as a tyrosyl ester. The cleavage gives rise to a free 3'-OH that serves as a primer for the cellular DNA polymerase. The polymerase synthesizes the (+) strand DNA by rolling circle mechanism. After one round of replication, a Rep-catalyzed nucleotidyl transfer reaction releases a circular single-stranded virus genome, thereby terminating the replication. Displays origin-specific DNA cleavage, nucleotidyl transferase, ATPase and helicase activities. Acts as an inhibitor of C-sense gene transcription. This chain is Replication-associated protein, found in Maize streak virus genotype A (isolate Nigeria) (MSV).